Reading from the N-terminus, the 229-residue chain is Heptaprenylglyceryl phosphate synthase (229 aa).

Lys12 is a sn-glycerol 1-phosphate binding site. Mg(2+)-binding residues include Asp14 and Ser40. Residues 159 to 164, Gly189, and 209 to 210 contribute to the sn-glycerol 1-phosphate site; these read YLEYSG and GN.

The protein belongs to the GGGP/HepGP synthase family. Group I subfamily. As to quaternary structure, homodimer. The cofactor is Mg(2+).

The enzyme catalyses sn-glycerol 1-phosphate + all-trans-heptaprenyl diphosphate = 3-heptaprenyl-sn-glycero-1-phosphate + diphosphate. It functions in the pathway membrane lipid metabolism; glycerophospholipid metabolism. In terms of biological role, prenyltransferase that catalyzes in vivo the transfer of the heptaprenyl moiety of heptaprenyl pyrophosphate (HepPP; 35 carbon atoms) to the C3 hydroxyl of sn-glycerol-1-phosphate (G1P), producing heptaprenylglyceryl phosphate (HepGP). This reaction is an ether-bond-formation step in the biosynthesis of archaea-type G1P-based membrane lipids found in Bacillales. The polypeptide is Heptaprenylglyceryl phosphate synthase (Bacillus cereus (strain ATCC 14579 / DSM 31 / CCUG 7414 / JCM 2152 / NBRC 15305 / NCIMB 9373 / NCTC 2599 / NRRL B-3711)).